A 345-amino-acid polypeptide reads, in one-letter code: D-fructose 1,6-bisphosphatase class 2/sedoheptulose 1,7-bisphosphatase (345 aa).

Residues Asp33, Glu57, Asp97, and Glu100 each coordinate Mn(2+). Residues 100 to 102, Tyr131, 176 to 178, and 198 to 200 contribute to the substrate site; these read EGT, RDR, and DGD. Residue Glu225 coordinates Mn(2+).

It belongs to the FBPase class 2 family. Homotetramer. Mn(2+) is required as a cofactor.

It carries out the reaction beta-D-fructose 1,6-bisphosphate + H2O = beta-D-fructose 6-phosphate + phosphate. The catalysed reaction is D-sedoheptulose 1,7-bisphosphate + H2O = D-sedoheptulose 7-phosphate + phosphate. It participates in carbohydrate biosynthesis; Calvin cycle. Its function is as follows. Catalyzes the hydrolysis of fructose 1,6-bisphosphate (Fru 1,6-P2) and sedoheptulose 1,7-bisphosphate (Sed 1,7-P2) to fructose 6-phosphate and sedoheptulose 7-phosphate, respectively. The polypeptide is D-fructose 1,6-bisphosphatase class 2/sedoheptulose 1,7-bisphosphatase (Trichormus variabilis (strain ATCC 29413 / PCC 7937) (Anabaena variabilis)).